We begin with the raw amino-acid sequence, 164 residues long: Peroxynitrite isomerase 2 (164 aa).

Positions 17-23 match the GXWXGXG motif; that stretch reads GSWAGRG. H155 lines the heme b pocket.

This sequence belongs to the nitrobindin family. In terms of assembly, homodimer. Requires heme b as cofactor.

The catalysed reaction is peroxynitrite = nitrate. Its pathway is nitrogen metabolism. In terms of biological role, heme-binding protein able to scavenge peroxynitrite and to protect free L-tyrosine against peroxynitrite-mediated nitration, by acting as a peroxynitrite isomerase that converts peroxynitrite to nitrate. Therefore, this protein likely plays a role in peroxynitrite sensing and in the detoxification of reactive nitrogen and oxygen species (RNS and ROS, respectively). Is able to bind nitric oxide (NO) in vitro, but may act as a sensor of peroxynitrite levels in vivo. The polypeptide is Peroxynitrite isomerase 2 (Mycobacterium bovis (strain BCG / Pasteur 1173P2)).